The sequence spans 218 residues: GTP cyclohydrolase 1 (218 aa).

Residues cysteine 109, histidine 112, and cysteine 180 each contribute to the Zn(2+) site.

This sequence belongs to the GTP cyclohydrolase I family. In terms of assembly, toroid-shaped homodecamer, composed of two pentamers of five dimers.

It catalyses the reaction GTP + H2O = 7,8-dihydroneopterin 3'-triphosphate + formate + H(+). It functions in the pathway cofactor biosynthesis; 7,8-dihydroneopterin triphosphate biosynthesis; 7,8-dihydroneopterin triphosphate from GTP: step 1/1. This is GTP cyclohydrolase 1 (folE) from Haemophilus influenzae (strain ATCC 51907 / DSM 11121 / KW20 / Rd).